Reading from the N-terminus, the 470-residue chain is Ribulose bisphosphate carboxylase large chain (470 aa).

Asn115 and Thr165 together coordinate substrate. Lys167 (proton acceptor) is an active-site residue. Lys169 is a substrate binding site. The Mg(2+) site is built by Lys193, Asp195, and Glu196. N6-carboxylysine is present on Lys193. The Proton acceptor role is filled by His286. Substrate contacts are provided by Arg287, His319, and Ser371.

This sequence belongs to the RuBisCO large chain family. Type I subfamily. Heterohexadecamer of 8 large chains and 8 small chains. Mg(2+) is required as a cofactor.

The protein localises to the carboxysome. The enzyme catalyses 2 (2R)-3-phosphoglycerate + 2 H(+) = D-ribulose 1,5-bisphosphate + CO2 + H2O. The catalysed reaction is D-ribulose 1,5-bisphosphate + O2 = 2-phosphoglycolate + (2R)-3-phosphoglycerate + 2 H(+). Functionally, ruBisCO catalyzes two reactions: the carboxylation of D-ribulose 1,5-bisphosphate, the primary event in carbon dioxide fixation, as well as the oxidative fragmentation of the pentose substrate in the photorespiration process. Both reactions occur simultaneously and in competition at the same active site. This chain is Ribulose bisphosphate carboxylase large chain, found in Synechococcus sp. (strain CC9311).